Consider the following 745-residue polypeptide: Cytoplasmic polyadenylation element-binding protein 3 (745 aa).

Disordered stretches follow at residues 1–45 (MNLN…KSPT), 94–180 (VGSK…TNNS), and 204–283 (NKAN…FGEL). The segment covering 162–175 (LNFERDAEQKKDST) has biased composition (basic and acidic residues). A compositionally biased stretch (polar residues) spans 219-229 (ETPTDSPQKGF). Over residues 230–240 (SSSTESSPSDS) the composition is skewed to low complexity. Positions 241–255 (MNQFPSREHFTSANE) are enriched in polar residues. Residues 264–276 (FQQEHGNKNRDSD) show a composition bias toward basic and acidic residues. Positions 297–319 (IFVGGVPWDITEAALKDSFGEFG) constitute an RRM domain.

Its function is as follows. Cytoplasmic polyadenylation element binding protein that binds to and regulates the translation of specific mRNAs. May not be required for oogenesis. The chain is Cytoplasmic polyadenylation element-binding protein 3 (cpb-3) from Caenorhabditis elegans.